A 504-amino-acid chain; its full sequence is Maturase K (504 aa).

Belongs to the intron maturase 2 family. MatK subfamily.

It localises to the plastid. It is found in the chloroplast. In terms of biological role, usually encoded in the trnK tRNA gene intron. Probably assists in splicing its own and other chloroplast group II introns. The protein is Maturase K of Amaranthus caudatus (Love-lies-bleeding).